Consider the following 82-residue polypeptide: M-zodatoxin-Lt3b (82 aa).

The signal sequence occupies residues 1-22; sequence MKTYAVLLALVVAFVCIAESTG. Positions 23–61 are excised as a propeptide; it reads YPVEDLEDDELTELEAEALLEDLLEDLELEDLDYNEEAR. The Processing quadruplet motif signature appears at 58 to 61; that stretch reads EEAR. Ala81 carries the alanine amide modification.

In terms of processing, cleavage of the propeptide depends on the processing quadruplet motif (XXXR, with at least one of X being E). As to expression, expressed by the venom gland.

Its subcellular location is the secreted. It has antimicrobial activity against Gram-positive bacteria (A.globiformis VKM Ac-1112 (MIC=0.7 uM), and B.subtilis VKM B-501 (MIC=2.9 uM)), Gram-negative bacteria (E.coli DH5-alpha (MIC=23 uM), E.coli MH1 (MIC=28 uM), and P.aeruginosa PAO1 (MIC&gt;45 uM)), and yeasts (P.pastoris GS115 (MIC=23 uM), and S.cerevisiae Y190 (MIC=23 uM)). Does not have hemolytic against rabbit erythrocytes. Causes paralysis, but is not lethal when injected into insect (M.domestica) larvae. The polypeptide is M-zodatoxin-Lt3b (Lachesana tarabaevi (Spider)).